The primary structure comprises 1322 residues: Putative DNA ligase 4 (1322 aa).

ATP contacts are provided by E265, K267, R272, R287, E317, F387, E497, K502, R513, K519, and K521. Catalysis depends on K267, which acts as the N6-AMP-lysine intermediate. E317 serves as a coordination point for Mg(2+). Residue E497 coordinates Mg(2+). BRCT domains are found at residues 686-768 (LDVQ…PKFD) and 825-935 (ERFC…TYSL). 2 disordered regions span residues 945-1212 (IERS…SATC) and 1245-1310 (AEAK…KKVS). Residues 957–969 (DKLEENEKADTSH) are compositionally biased toward basic and acidic residues. Composition is skewed to basic residues over residues 970–979 (VKHAPRKRGR) and 994–1005 (PVRRTRARRGNQ). 2 stretches are compositionally biased toward basic and acidic residues: residues 1007-1022 (AKID…HGET) and 1033-1047 (NISK…KDQV). The span at 1051–1063 (PVRRTRARRGKQH) shows a compositional bias: basic residues. 3 stretches are compositionally biased toward basic and acidic residues: residues 1082-1104 (DDQR…RDQG), 1125-1161 (AKID…KDQE), and 1190-1204 (PKHE…RDTA). Low complexity predominate over residues 1261 to 1288 (SSYVAPVPQASASSASSSGVPAPHAGSS).

This sequence belongs to the ATP-dependent DNA ligase family. Mg(2+) is required as a cofactor.

The protein resides in the nucleus. It catalyses the reaction ATP + (deoxyribonucleotide)n-3'-hydroxyl + 5'-phospho-(deoxyribonucleotide)m = (deoxyribonucleotide)n+m + AMP + diphosphate.. DNA ligase involved in DNA non-homologous end joining (NHEJ); required for double-strand break (DSB) repair. The chain is Putative DNA ligase 4 (LIG4) from Oryza sativa subsp. japonica (Rice).